A 388-amino-acid chain; its full sequence is Succinate--CoA ligase [ADP-forming] subunit beta (388 aa).

The 237-residue stretch at 9 to 245 folds into the ATP-grasp domain; it reads KALLKKYGVS…KSQENERELK (237 aa). Residues K46, 53-55, E100, Y103, and E108 each bind ATP; that span reads GRG. The Mg(2+) site is built by N200 and D214. Residues N265 and 322–324 each bind substrate; that span reads GIV.

Belongs to the succinate/malate CoA ligase beta subunit family. Heterotetramer of two alpha and two beta subunits. Requires Mg(2+) as cofactor.

It carries out the reaction succinate + ATP + CoA = succinyl-CoA + ADP + phosphate. It catalyses the reaction GTP + succinate + CoA = succinyl-CoA + GDP + phosphate. It functions in the pathway carbohydrate metabolism; tricarboxylic acid cycle; succinate from succinyl-CoA (ligase route): step 1/1. Its function is as follows. Succinyl-CoA synthetase functions in the citric acid cycle (TCA), coupling the hydrolysis of succinyl-CoA to the synthesis of either ATP or GTP and thus represents the only step of substrate-level phosphorylation in the TCA. The beta subunit provides nucleotide specificity of the enzyme and binds the substrate succinate, while the binding sites for coenzyme A and phosphate are found in the alpha subunit. The protein is Succinate--CoA ligase [ADP-forming] subunit beta of Acinetobacter baylyi (strain ATCC 33305 / BD413 / ADP1).